The primary structure comprises 450 residues: Phosphoglucosamine mutase (450 aa).

The active-site Phosphoserine intermediate is the serine 101. Mg(2+) is bound by residues serine 101, aspartate 241, aspartate 243, and aspartate 245. Residue serine 101 is modified to Phosphoserine.

It belongs to the phosphohexose mutase family. It depends on Mg(2+) as a cofactor. Post-translationally, activated by phosphorylation.

The enzyme catalyses alpha-D-glucosamine 1-phosphate = D-glucosamine 6-phosphate. Its function is as follows. Catalyzes the conversion of glucosamine-6-phosphate to glucosamine-1-phosphate. The polypeptide is Phosphoglucosamine mutase (Lysinibacillus sphaericus (strain C3-41)).